The chain runs to 259 residues: NAD kinase (259 aa).

The active-site Proton acceptor is the Asp49. Residues 49–50, Arg54, 118–119, Asp148, Ala156, 159–164, and Ala183 each bind NAD(+); these read DG, NE, and TAYNYS.

It belongs to the NAD kinase family. It depends on a divalent metal cation as a cofactor.

It is found in the cytoplasm. It catalyses the reaction NAD(+) + ATP = ADP + NADP(+) + H(+). In terms of biological role, involved in the regulation of the intracellular balance of NAD and NADP, and is a key enzyme in the biosynthesis of NADP. Catalyzes specifically the phosphorylation on 2'-hydroxyl of the adenosine moiety of NAD to yield NADP. This is NAD kinase from Xylella fastidiosa (strain Temecula1 / ATCC 700964).